The chain runs to 147 residues: RxLR effector protein Avr3a (147 aa).

Positions 1–21 are cleaved as a signal peptide; the sequence is MRLAIMLSATAVAINFATSSA. Positions 44–59 match the RxLR-dEER motif; sequence RLLRKNEENEETSEER. An N6-acetyllysine modification is found at Lys-48. Residues 77–147 form an effector domain region; the sequence is ALTERADAKK…YMMHLGLTGY (71 aa).

This sequence belongs to the RxLR effector family. In terms of assembly, forms homodimers via the RxLR-dEER motif. Interacts with host E3 ligase CMPG1. Interacts with host DRP2. Proteolytically cleaved. The cleavage site directly after the RxLR sequence and the high conservation among other effector proteins suggest that the RxLR motif might play a crucial role in the intracellular processing before secretion. In terms of processing, glycosylated. Post-translationally, N-acetylated at Lys-48 after cleavage.

The protein resides in the secreted. It is found in the host cytoplasm. Functionally, multifunctional effector that can suppress host BAK1/SERK3-mediated immunity through at least two different pathways. Manipulates plant immunity by targeting and stabilizing host E3 ligase CMPG1. Preventing the normal 26S proteasome-dependent degradation of potato CMPG1, and thus potentially of its protein substrates in the host cell, further abolishes host cell death during the biotrophic phase of infection. Also associates with and affects the function of the dynamin-related protein 2 (DRP2), a plant GTPase involved in immune receptor-mediated endocytosis. The Avr3a(EM) form evades recognition by R3a, thus does not trigger R3a-mediated hypersensitivity and does not suppress INF1-induced cell death. The chain is RxLR effector protein Avr3a from Phytophthora infestans (Potato late blight agent).